The following is an 867-amino-acid chain: Zinc finger protein zfp-1 (867 aa).

Residues 5–57 (VGGCCVCADENGWTDNPLIYCDGENCEVAVHQGCYGIQEVPEGEWFCAKCTKA) form a PHD-type 1 zinc finger. The C2HC pre-PHD-type 2 zinc finger occupies 69–102 (TFCCQLCPFDYGALKKTDRNGWAHVICALYIPEV). The interval 69–186 (TFCCQLCPFD…KYCGYCENHL (118 aa)) is extended PHD2 domain (ePHD2). Residues 125–186 (KLCYICNEER…KYCGYCENHL (62 aa)) form a PHD-type 2 zinc finger. Disordered regions lie at residues 267–311 (GSTV…SLSS), 440–477 (KNDM…GKSP), 503–586 (ADRT…QSNR), and 753–773 (SSGA…STAG). Positions 285 to 311 (PLTTSSRSSVAQDPSPPLTINKNSLSS) are enriched in polar residues. The span at 503–512 (ADRTAAERRA) shows a compositional bias: basic and acidic residues. Polar residues predominate over residues 516-527 (QSQPSTSTNGGP). A compositionally biased stretch (low complexity) spans 538-550 (HTNSTNSTNHQNN). Positions 551–573 (GLTQNAPASTSMQAGTSSNDGVI) are enriched in polar residues. Over residues 574 to 585 (SQNGTSSTSQSN) the composition is skewed to low complexity. A compositionally biased stretch (polar residues) spans 758 to 771 (VNSNIQNHRATPST).

Multimer; in vitro. Interacts (via C-terminus) with dot-1.1 to form a heterodimer known as the zfp-1-dot-1.1 complex or DotCom complex. In terms of tissue distribution, isoform a: Expressed at high levels in maturing oocytes, but at low levels in the rest of the germ line (at protein level). Isoform a: Not expressed in the pharynx, germ line and tail. Isoform c: Not expressed in the germ line (at protein level). Isoform c: Uniformly expressed.

It is found in the nucleus. The protein localises to the chromosome. In terms of biological role, recruits the histone methyltransferase dot-1.1 to chromatin to methylate 'Lys-79' of histone H3 and activate transcription. Recognizes and binds histone H3 methylated at 'Lys-4' (H3K4me) at the promoters of target genes. During stress, the zfp-1-dot-1.1 complex also plays a role in the deubiquitination of histone H2B sites, which negatively modulates the RNA polymerase II-induced transcription of highly expressed genes. In response to stress, binds to the pdk-1 promoter to negatively regulate pdk-1 expression, which negatively modulates daf-16/FOXO-mediated gene expression. Thus, most likely via this mechanism, in response to stress, it confers a protective role against neuronal necrosis. Plays a role in Insulin/IGF-1-like signaling (IIS)- and diet restriction-mediated lifespan extension by controlling daf-16/FOXO and pha-4/FOXA recruitment to target promoters. May negatively regulate the expression of genes required for vulval development. May play a role in axon guidance in D-type motor neurons. May suppress sensitivity to RNAi. Functionally, required for migration of HSN motor neurons during embryogenesis. In Caenorhabditis elegans, this protein is Zinc finger protein zfp-1.